A 429-amino-acid polypeptide reads, in one-letter code: Bifunctional phosphoribosylaminoimidazole carboxylase/phosphoribosylaminoimidazole succinocarboxamide synthetase (429 aa).

The segment at 7–264 (ASIEGYKLGK…WVAEQLADIV (258 aa)) is SAICAR synthetase. Residues 7 to 264 (ASIEGYKLGK…WVAEQLADIV (258 aa)) form an SAICAR synthetase domain region. Residues 265 to 429 (PKKDHLVVIL…DKELRGVRNA (165 aa)) form an AIR carboxylase region. Residues 270-429 (LVVILMGSAS…DKELRGVRNA (160 aa)) form an AIR carboxylase domain region. Position 335 (S335) interacts with CO2.

The protein in the N-terminal section; belongs to the SAICAR synthetase family. It in the C-terminal section; belongs to the AIR carboxylase family. Class II subfamily. Homooctamer.

The catalysed reaction is 5-amino-1-(5-phospho-D-ribosyl)imidazole-4-carboxylate + L-aspartate + ATP = (2S)-2-[5-amino-1-(5-phospho-beta-D-ribosyl)imidazole-4-carboxamido]succinate + ADP + phosphate + 2 H(+). It catalyses the reaction 5-amino-1-(5-phospho-D-ribosyl)imidazole-4-carboxylate + H(+) = 5-amino-1-(5-phospho-beta-D-ribosyl)imidazole + CO2. Its pathway is purine metabolism; IMP biosynthesis via de novo pathway; 5-amino-1-(5-phospho-D-ribosyl)imidazole-4-carboxamide from 5-amino-1-(5-phospho-D-ribosyl)imidazole-4-carboxylate: step 1/2. The protein operates within purine metabolism; IMP biosynthesis via de novo pathway; 5-amino-1-(5-phospho-D-ribosyl)imidazole-4-carboxylate from 5-amino-1-(5-phospho-D-ribosyl)imidazole (carboxylase route): step 1/1. Bifunctional phosphoribosylaminoimidazole carboxylase and phosphoribosylaminoimidazole succinocarboxamide synthetase catalyzing two reactions of the de novo purine biosynthetic pathway. The polypeptide is Bifunctional phosphoribosylaminoimidazole carboxylase/phosphoribosylaminoimidazole succinocarboxamide synthetase (Drosophila melanogaster (Fruit fly)).